Reading from the N-terminus, the 76-residue chain is Spore germination protein-like protein YdzR (76 aa).

It belongs to the GerPA/GerPF family.

In Bacillus subtilis (strain 168), this protein is Spore germination protein-like protein YdzR (ydzR).